A 213-amino-acid chain; its full sequence is Orotate phosphoribosyltransferase (213 aa).

Lys26 provides a ligand contact to 5-phospho-alpha-D-ribose 1-diphosphate. Residue 34–35 (FF) participates in orotate binding. 5-phospho-alpha-D-ribose 1-diphosphate-binding positions include 72-73 (YK), Arg99, Lys100, Lys103, His105, and 124-132 (DDVITAGTA). Residues Thr128 and Arg156 each coordinate orotate.

The protein belongs to the purine/pyrimidine phosphoribosyltransferase family. PyrE subfamily. Homodimer. Mg(2+) is required as a cofactor.

The enzyme catalyses orotidine 5'-phosphate + diphosphate = orotate + 5-phospho-alpha-D-ribose 1-diphosphate. The protein operates within pyrimidine metabolism; UMP biosynthesis via de novo pathway; UMP from orotate: step 1/2. Functionally, catalyzes the transfer of a ribosyl phosphate group from 5-phosphoribose 1-diphosphate to orotate, leading to the formation of orotidine monophosphate (OMP). This chain is Orotate phosphoribosyltransferase, found in Escherichia coli O139:H28 (strain E24377A / ETEC).